Consider the following 427-residue polypeptide: Peptidase B (427 aa).

Lys195 and Asp200 together coordinate Mn(2+). Residue Lys207 is part of the active site. Mn(2+)-binding residues include Asp218, Asp277, and Glu279. Residue Arg281 is part of the active site.

Belongs to the peptidase M17 family. Homohexamer. Mn(2+) is required as a cofactor.

It is found in the cytoplasm. The catalysed reaction is Release of an N-terminal amino acid, Xaa, from a peptide or arylamide. Xaa is preferably Glu or Asp but may be other amino acids, including Leu, Met, His, Cys and Gln.. Functionally, probably plays an important role in intracellular peptide degradation. The polypeptide is Peptidase B (Shigella flexneri).